Consider the following 483-residue polypeptide: UDP-N-acetylmuramoyl-L-alanyl-D-glutamate--2,6-diaminopimelate ligase (483 aa).

Position 30 (serine 30) interacts with UDP-N-acetyl-alpha-D-muramoyl-L-alanyl-D-glutamate. 109–115 is an ATP binding site; the sequence is GTNGKTT. Residues 151 to 152, serine 178, and arginine 186 each bind UDP-N-acetyl-alpha-D-muramoyl-L-alanyl-D-glutamate; that span reads TT. Lysine 218 carries the N6-carboxylysine modification. Meso-2,6-diaminopimelate contacts are provided by residues arginine 380, 403–406, glycine 453, and glutamate 457; that span reads DNPR. A Meso-diaminopimelate recognition motif motif is present at residues 403–406; the sequence is DNPR.

Belongs to the MurCDEF family. MurE subfamily. It depends on Mg(2+) as a cofactor. Post-translationally, carboxylation is probably crucial for Mg(2+) binding and, consequently, for the gamma-phosphate positioning of ATP.

It is found in the cytoplasm. The enzyme catalyses UDP-N-acetyl-alpha-D-muramoyl-L-alanyl-D-glutamate + meso-2,6-diaminopimelate + ATP = UDP-N-acetyl-alpha-D-muramoyl-L-alanyl-gamma-D-glutamyl-meso-2,6-diaminopimelate + ADP + phosphate + H(+). It functions in the pathway cell wall biogenesis; peptidoglycan biosynthesis. Functionally, catalyzes the addition of meso-diaminopimelic acid to the nucleotide precursor UDP-N-acetylmuramoyl-L-alanyl-D-glutamate (UMAG) in the biosynthesis of bacterial cell-wall peptidoglycan. The sequence is that of UDP-N-acetylmuramoyl-L-alanyl-D-glutamate--2,6-diaminopimelate ligase from Chlamydia trachomatis serovar A (strain ATCC VR-571B / DSM 19440 / HAR-13).